The sequence spans 183 residues: MRLLAFAVLALFAVTQAEEGARLLASKSLLNRYAVEGRDLTLQYNIYNVGSSAALDVELSDDSFPPEDFGIVSGMLNVKWDRIAPASNVSHTVVLRPLKAGYFNFTSATVTYLAQEDGPVVIGFTSAPGQGGILAQREFDRRFSPHFLDWAAFGVMTLPSIGVPLLLWYSSKRKYDTPKTKKN.

Positions 1–17 (MRLLAFAVLALFAVTQA) are cleaved as a signal peptide. The Lumenal portion of the chain corresponds to 18–146 (EEGARLLASK…REFDRRFSPH (129 aa)). Asn88 carries an N-linked (GlcNAc...) asparagine glycan. The chain crosses the membrane as a helical span at residues 147-167 (FLDWAAFGVMTLPSIGVPLLL). At 168–183 (WYSSKRKYDTPKTKKN) the chain is on the cytoplasmic side.

This sequence belongs to the TRAP-beta family. Heterotetramer of TRAP-alpha, TRAP-beta, TRAP-delta and TRAP-gamma. Interacts with STING1.

The protein localises to the endoplasmic reticulum membrane. TRAP proteins are part of a complex whose function is to bind calcium to the ER membrane and thereby regulate the retention of ER resident proteins. This chain is Translocon-associated protein subunit beta (SSR2), found in Bos taurus (Bovine).